Consider the following 379-residue polypeptide: Cell division protein FtsZ (379 aa).

GTP-binding positions include 18–22, 105–107, Glu136, Arg140, and Asp184; these read GGGVN and GTG.

Belongs to the FtsZ family. As to quaternary structure, homodimer. Polymerizes to form a dynamic ring structure in a strictly GTP-dependent manner. Interacts directly with several other division proteins.

Its subcellular location is the cytoplasm. In terms of biological role, essential cell division protein that forms a contractile ring structure (Z ring) at the future cell division site. The regulation of the ring assembly controls the timing and the location of cell division. One of the functions of the FtsZ ring is to recruit other cell division proteins to the septum to produce a new cell wall between the dividing cells. Binds GTP and shows GTPase activity. This Mycobacterium leprae (strain TN) protein is Cell division protein FtsZ.